The primary structure comprises 448 residues: Tubulin alpha-4A chain (448 aa).

Residues 1–4 (MREC) carry the MREC motif motif. Glutamine 11 lines the GTP pocket. Lysine 40 is modified (N6-acetyllysine). Position 48 is a phosphoserine (serine 48). Glutamate 71 contacts GTP. Position 71 (glutamate 71) interacts with Mg(2+). Tyrosine 83 is subject to 3'-nitrotyrosine. 6 residues coordinate GTP: serine 140, glycine 144, threonine 145, threonine 179, asparagine 206, and asparagine 228. Residue glutamate 254 is part of the active site. Residue tyrosine 432 is modified to Phosphotyrosine. The residue at position 439 (serine 439) is a Phosphoserine.

Belongs to the tubulin family. As to quaternary structure, dimer of alpha and beta chains. A typical microtubule is a hollow water-filled tube with an outer diameter of 25 nm and an inner diameter of 15 nM. Alpha-beta heterodimers associate head-to-tail to form protofilaments running lengthwise along the microtubule wall with the beta-tubulin subunit facing the microtubule plus end conferring a structural polarity. Microtubules usually have 13 protofilaments but different protofilament numbers can be found in some organisms and specialized cells. Interacts with CFAP157. The cofactor is Mg(2+). Post-translationally, some glutamate residues at the C-terminus are polyglycylated, resulting in polyglycine chains on the gamma-carboxyl group. Glycylation is mainly limited to tubulin incorporated into axonemes (cilia and flagella) whereas glutamylation is prevalent in neuronal cells, centrioles, axonemes, and the mitotic spindle. Both modifications can coexist on the same protein on adjacent residues, and lowering polyglycylation levels increases polyglutamylation, and reciprocally. Cilia and flagella glycylation is required for their stability and maintenance. Flagella glycylation controls sperm motility. In terms of processing, some glutamate residues at the C-terminus are polyglutamylated, resulting in polyglutamate chains on the gamma-carboxyl group. Polyglutamylation plays a key role in microtubule severing by spastin (SPAST). SPAST preferentially recognizes and acts on microtubules decorated with short polyglutamate tails: severing activity by SPAST increases as the number of glutamates per tubulin rises from one to eight, but decreases beyond this glutamylation threshold. Glutamylation is also involved in cilia motility. Acetylation of alpha chains at Lys-40 is located inside the microtubule lumen. This modification has been correlated with increased microtubule stability, intracellular transport and ciliary assembly. Post-translationally, methylation of alpha chains at Lys-40 is found in mitotic microtubules and is required for normal mitosis and cytokinesis contributing to genomic stability. In terms of processing, although this tubulin does not encode a C-terminal tyrosine, a C-terminal tyrosine can be added post-translationally by the tubulin tyrosine ligase (TTL). It can then undergo a detyrosination cycle by the tubulin tyrosine carboxypeptidase (MATCAP1/KIAA0895L).

It is found in the cytoplasm. Its subcellular location is the cytoskeleton. It carries out the reaction GTP + H2O = GDP + phosphate + H(+). In terms of biological role, tubulin is the major constituent of microtubules, a cylinder consisting of laterally associated linear protofilaments composed of alpha- and beta-tubulin heterodimers. Microtubules grow by the addition of GTP-tubulin dimers to the microtubule end, where a stabilizing cap forms. Below the cap, tubulin dimers are in GDP-bound state, owing to GTPase activity of alpha-tubulin. The protein is Tubulin alpha-4A chain (TUBA4A) of Macaca fascicularis (Crab-eating macaque).